The chain runs to 269 residues: NAD kinase (269 aa).

D45 acts as the Proton acceptor in catalysis. Residues 45–46 (DG), 122–123 (NE), R149, D151, and A186 contribute to the NAD(+) site.

The protein belongs to the NAD kinase family. It depends on a divalent metal cation as a cofactor.

The protein resides in the cytoplasm. The enzyme catalyses NAD(+) + ATP = ADP + NADP(+) + H(+). Functionally, involved in the regulation of the intracellular balance of NAD and NADP, and is a key enzyme in the biosynthesis of NADP. Catalyzes specifically the phosphorylation on 2'-hydroxyl of the adenosine moiety of NAD to yield NADP. This chain is NAD kinase, found in Staphylococcus aureus (strain Mu3 / ATCC 700698).